A 447-amino-acid polypeptide reads, in one-letter code: Elongation factor 1-alpha (447 aa).

Positions lysine 5 to serine 230 constitute a tr-type G domain. Residues glycine 14–serine 21 form a G1 region. Glycine 14–serine 21 is a binding site for GTP. Lysine 55 is modified (N6,N6-dimethyllysine). The interval glycine 70 to aspartate 74 is G2. Lysine 79 carries the N6,N6,N6-trimethyllysine modification. Positions aspartate 91 to glycine 94 are G3. GTP is bound by residues aspartate 91–histidine 95 and asparagine 153–aspartate 156. A G4 region spans residues asparagine 153–aspartate 156. Lysine 187 is modified (N6,N6,N6-trimethyllysine). The tract at residues serine 194–phenylalanine 196 is G5. The residue at position 261 (lysine 261) is an N6-methyllysine. At glutamate 289 the chain carries 5-glutamyl glycerylphosphorylethanolamine. At lysine 306 the chain carries N6,N6,N6-trimethyllysine. Glutamate 362 carries the post-translational modification 5-glutamyl glycerylphosphorylethanolamine. Residue lysine 396 is modified to N6,N6,N6-trimethyllysine.

It belongs to the TRAFAC class translation factor GTPase superfamily. Classic translation factor GTPase family. EF-Tu/EF-1A subfamily.

It localises to the cytoplasm. Functionally, this protein promotes the GTP-dependent binding of aminoacyl-tRNA to the A-site of ribosomes during protein biosynthesis. This Daucus carota (Wild carrot) protein is Elongation factor 1-alpha.